The sequence spans 256 residues: Protein FixA (256 aa).

This sequence belongs to the ETF beta-subunit/FixA family. As to quaternary structure, heterodimer of FixA and FixB.

Its pathway is amine and polyamine metabolism; carnitine metabolism. Required for anaerobic carnitine reduction. May bring reductant to CaiA. The polypeptide is Protein FixA (Salmonella paratyphi B (strain ATCC BAA-1250 / SPB7)).